We begin with the raw amino-acid sequence, 398 residues long: Acetate kinase 1 (398 aa).

Asn-10 serves as a coordination point for Mg(2+). Position 17 (Lys-17) interacts with ATP. Arg-89 is a substrate binding site. Asp-146 serves as the catalytic Proton donor/acceptor. ATP is bound by residues 206 to 210 (HLGNG), 281 to 283 (DCR), and 329 to 333 (GIGEN). Glu-384 contributes to the Mg(2+) binding site.

It belongs to the acetokinase family. As to quaternary structure, homodimer. The cofactor is Mg(2+). Mn(2+) serves as cofactor.

The protein resides in the cytoplasm. It carries out the reaction acetate + ATP = acetyl phosphate + ADP. It functions in the pathway metabolic intermediate biosynthesis; acetyl-CoA biosynthesis; acetyl-CoA from acetate: step 1/2. Functionally, catalyzes the formation of acetyl phosphate from acetate and ATP. Can also catalyze the reverse reaction. In Neisseria meningitidis serogroup A / serotype 4A (strain DSM 15465 / Z2491), this protein is Acetate kinase 1.